The chain runs to 382 residues: tRNA-specific 2-thiouridylase MnmA (382 aa).

ATP contacts are provided by residues 34–41 (AMSGGVDS) and Leu60. The active-site Nucleophile is the Cys128. Cys128 and Cys224 are oxidised to a cystine. Position 152 (Gly152) interacts with ATP. The segment at 174–176 (RDQ) is interaction with tRNA. The active-site Cysteine persulfide intermediate is Cys224.

It belongs to the MnmA/TRMU family.

It localises to the cytoplasm. It carries out the reaction S-sulfanyl-L-cysteinyl-[protein] + uridine(34) in tRNA + AH2 + ATP = 2-thiouridine(34) in tRNA + L-cysteinyl-[protein] + A + AMP + diphosphate + H(+). In terms of biological role, catalyzes the 2-thiolation of uridine at the wobble position (U34) of tRNA, leading to the formation of s(2)U34. The protein is tRNA-specific 2-thiouridylase MnmA of Sphingopyxis alaskensis (strain DSM 13593 / LMG 18877 / RB2256) (Sphingomonas alaskensis).